Reading from the N-terminus, the 285-residue chain is Meiotically up-regulated gene 74 protein (285 aa).

The protein localises to the cytoplasm. Functionally, has a role in meiosis. The sequence is that of Meiotically up-regulated gene 74 protein (mug74) from Schizosaccharomyces pombe (strain 972 / ATCC 24843) (Fission yeast).